A 177-amino-acid polypeptide reads, in one-letter code: Hypoxanthine phosphoribosyltransferase (177 aa).

2 residues coordinate diphosphate: Arg43 and Gly44. Glu99 lines the GMP pocket. Glu99 provides a ligand contact to IMP. Positions 99 and 100 each coordinate Mg(2+). The active-site Proton acceptor is Asp103. GMP is bound by residues 103-108, Lys131, and Asp159; that span reads DSGKTL. Residues 103–108 and Lys131 each bind IMP; that span reads DSGKTL. Arg165 is a binding site for diphosphate.

This sequence belongs to the purine/pyrimidine phosphoribosyltransferase family. Homotetramer. The cofactor is Mg(2+).

Its subcellular location is the cytoplasm. It carries out the reaction IMP + diphosphate = hypoxanthine + 5-phospho-alpha-D-ribose 1-diphosphate. It catalyses the reaction GMP + diphosphate = guanine + 5-phospho-alpha-D-ribose 1-diphosphate. The protein operates within purine metabolism; IMP biosynthesis via salvage pathway; IMP from hypoxanthine: step 1/1. Purine salvage pathway enzyme which catalyzes the transfer of the ribosyl-5-phosphate group from 5-phospho-alpha-D-ribose 1-diphosphate (PRPP) to the N9 position of hypoxanthine to yield IMP (inosine 5'-monophosphate). To a lesser extent, can also act on guanine leading to GMP, but shows a highly less efficient activity with xanthine. The protein is Hypoxanthine phosphoribosyltransferase (hpt) of Buchnera aphidicola subsp. Schizaphis graminum (strain Sg).